A 437-amino-acid polypeptide reads, in one-letter code: Sulfite reductase, dissimilatory-type subunit alpha (437 aa).

Residues Cys-177, Cys-183, Cys-221, Cys-225, Cys-284, Cys-303, Cys-306, and Cys-309 each contribute to the [4Fe-4S] cluster site. In terms of domain architecture, 4Fe-4S ferredoxin-type spans 294–322 (SKLSIDNKECVRCMHCINTMPRALHIGDE).

In terms of assembly, heterohexamer of two alpha, two beta and two gamma subunits.

Its function is as follows. Part of the complex that catalyzes the reduction of sulfite to sulfide. The alpha and beta subunits may have arisen by gene duplication. They both bind 2 iron-sulfur clusters, but the alpha subunit seems to be catalytically inactive, due to substitutions along the putative substrate access channel, and because it binds sirohydrochlorin (the dematallated form of siroheme) instead of siroheme. The chain is Sulfite reductase, dissimilatory-type subunit alpha (dsvA) from Nitratidesulfovibrio vulgaris (strain ATCC 29579 / DSM 644 / CCUG 34227 / NCIMB 8303 / VKM B-1760 / Hildenborough) (Desulfovibrio vulgaris).